Consider the following 337-residue polypeptide: Glyceraldehyde-3-phosphate dehydrogenase (337 aa).

Residues 11-12, Asp-33, and Lys-78 each bind NAD(+); that span reads RI. Residues 149-151, Thr-180, 209-210, and Arg-232 each bind D-glyceraldehyde 3-phosphate; these read SCT and TG. Residue Cys-150 is the Nucleophile of the active site. NAD(+) is bound at residue Asn-314.

Belongs to the glyceraldehyde-3-phosphate dehydrogenase family. As to quaternary structure, homotetramer.

It localises to the cytoplasm. It carries out the reaction D-glyceraldehyde 3-phosphate + phosphate + NAD(+) = (2R)-3-phospho-glyceroyl phosphate + NADH + H(+). It functions in the pathway carbohydrate degradation; glycolysis; pyruvate from D-glyceraldehyde 3-phosphate: step 1/5. This Lyophyllum shimeji (Hon-shimeji) protein is Glyceraldehyde-3-phosphate dehydrogenase (GPD).